The following is a 155-amino-acid chain: UPF0266 membrane protein LMHCC_1856 (155 aa).

A run of 3 helical transmembrane segments spans residues 8 to 28 (IFLF…DAVI), 46 to 66 (RWDG…NTFF), and 70 to 90 (PFST…ICFF).

Belongs to the UPF0266 family.

It localises to the cell membrane. This is UPF0266 membrane protein LMHCC_1856 from Listeria monocytogenes serotype 4a (strain HCC23).